A 525-amino-acid polypeptide reads, in one-letter code: Ent-kaurene oxidase (525 aa).

The chain crosses the membrane as a helical span at residues 31–51 (VHWLIYVAFGAWLCSYVIHVL). A heme-binding site is contributed by cysteine 466.

The protein belongs to the cytochrome P450 family. Heme is required as a cofactor.

The protein localises to the membrane. It catalyses the reaction ent-kaur-16-ene + 3 reduced [NADPH--hemoprotein reductase] + 3 O2 = ent-kaur-16-en-19-oate + 3 oxidized [NADPH--hemoprotein reductase] + 4 H2O + 4 H(+). Its pathway is plant hormone biosynthesis; gibberellin biosynthesis. Catalyzes three successive oxidations of the 4-methyl group of ent-kaurene giving kaurenoic acid, a key step in gibberellin (GA) biosynthesis. The chain is Ent-kaurene oxidase (CYP503A1) from Gibberella intermedia (Bulb rot disease fungus).